The primary structure comprises 77 residues: Large ribosomal subunit protein eL14 (77 aa).

The protein belongs to the eukaryotic ribosomal protein eL14 family.

The protein is Large ribosomal subunit protein eL14 of Methanococcus vannielii (strain ATCC 35089 / DSM 1224 / JCM 13029 / OCM 148 / SB).